The primary structure comprises 110 residues: UPF0060 membrane protein Bamb_1160 (110 aa).

Helical transmembrane passes span 9 to 29, 34 to 54, 66 to 86, and 88 to 108; these read ALFA…WLVL, PVWL…LLTL, YGGV…GVAL, and RWDA…ALQP.

This sequence belongs to the UPF0060 family.

Its subcellular location is the cell inner membrane. The protein is UPF0060 membrane protein Bamb_1160 of Burkholderia ambifaria (strain ATCC BAA-244 / DSM 16087 / CCUG 44356 / LMG 19182 / AMMD) (Burkholderia cepacia (strain AMMD)).